Here is a 118-residue protein sequence, read N- to C-terminus: Large ribosomal subunit protein bL12 (118 aa).

N-acetylmethionine; in form MA2 is present on methionine 1.

This sequence belongs to the bacterial ribosomal protein bL12 family. As to quaternary structure, homodimer. Part of the ribosomal stalk of the 50S ribosomal subunit. Forms a multimeric L10(L12)X complex, where L10 forms an elongated spine to which 2 to 4 L12 dimers bind in a sequential fashion. Binds GTP-bound translation factors. Post-translationally, acetylation of Met-1 converts MA1 to MA2.

Functionally, forms part of the ribosomal stalk which helps the ribosome interact with GTP-bound translation factors. Is thus essential for accurate translation. This Micrococcus luteus (Micrococcus lysodeikticus) protein is Large ribosomal subunit protein bL12.